Consider the following 200-residue polypeptide: NADH-quinone oxidoreductase subunit C (200 aa).

Belongs to the complex I 30 kDa subunit family. NDH-1 is composed of 14 different subunits. Subunits NuoB, C, D, E, F, and G constitute the peripheral sector of the complex.

It is found in the cell inner membrane. It catalyses the reaction a quinone + NADH + 5 H(+)(in) = a quinol + NAD(+) + 4 H(+)(out). In terms of biological role, NDH-1 shuttles electrons from NADH, via FMN and iron-sulfur (Fe-S) centers, to quinones in the respiratory chain. The immediate electron acceptor for the enzyme in this species is believed to be ubiquinone. Couples the redox reaction to proton translocation (for every two electrons transferred, four hydrogen ions are translocated across the cytoplasmic membrane), and thus conserves the redox energy in a proton gradient. The chain is NADH-quinone oxidoreductase subunit C from Rhizobium johnstonii (strain DSM 114642 / LMG 32736 / 3841) (Rhizobium leguminosarum bv. viciae).